Here is a 617-residue protein sequence, read N- to C-terminus: Zinc metalloproteinase nas-36 (617 aa).

Positions methionine 1–alanine 22 are cleaved as a signal peptide. Residues aspartate 23–arginine 126 constitute a propeptide that is removed on maturation. Positions serine 127–lysine 322 constitute a Peptidase M12A domain. 9 cysteine pairs are disulfide-bonded: cysteine 169–cysteine 321, cysteine 192–cysteine 211, cysteine 325–cysteine 346, cysteine 348–cysteine 357, cysteine 368–cysteine 397, cysteine 425–cysteine 445, cysteine 519–cysteine 550, cysteine 523–cysteine 555, and cysteine 535–cysteine 540. A glycan (N-linked (GlcNAc...) asparagine) is linked at asparagine 174. Histidine 219 contacts Zn(2+). Glutamate 220 is an active-site residue. Positions 223 and 229 each coordinate Zn(2+). In terms of domain architecture, EGF-like spans asparagine 317 to glutamate 358. The 115-residue stretch at cysteine 368 to threonine 482 folds into the CUB domain. In terms of domain architecture, TSP type-1 spans proline 507–proline 556.

Zn(2+) serves as cofactor. Expressed in hypodermal cells. Also detected in the hypodermal seam cells in L4 larvae and young adults. In old adult hermaphrodites, it localizes to the vulva (at protein level).

It localises to the secreted. In terms of biological role, metalloprotease. Involved in molting, a process during larval stages in which a new cuticle is formed and the old cuticle is shed. This chain is Zinc metalloproteinase nas-36 (nas-36), found in Caenorhabditis elegans.